We begin with the raw amino-acid sequence, 143 residues long: Large ribosomal subunit protein uL11 (143 aa).

It belongs to the universal ribosomal protein uL11 family. As to quaternary structure, part of the ribosomal stalk of the 50S ribosomal subunit. Interacts with L10 and the large rRNA to form the base of the stalk. L10 forms an elongated spine to which L12 dimers bind in a sequential fashion forming a multimeric L10(L12)X complex. In terms of processing, one or more lysine residues are methylated.

Forms part of the ribosomal stalk which helps the ribosome interact with GTP-bound translation factors. The protein is Large ribosomal subunit protein uL11 of Bifidobacterium adolescentis (strain ATCC 15703 / DSM 20083 / NCTC 11814 / E194a).